Reading from the N-terminus, the 114-residue chain is Probable 4-amino-4-deoxy-L-arabinose-phosphoundecaprenol flippase subunit ArnE (114 aa).

The next 3 membrane-spanning stretches (helical) occupy residues 38 to 58 (LTLR…LLWL), 64 to 84 (LPLS…TLAA), and 94 to 114 (LRHW…SWHL). Positions 43 to 112 (LAIAVVSLGL…IMFGILLMSW (70 aa)) constitute an EamA domain.

This sequence belongs to the ArnE family. In terms of assembly, heterodimer of ArnE and ArnF.

Its subcellular location is the cell inner membrane. It participates in bacterial outer membrane biogenesis; lipopolysaccharide biosynthesis. Its function is as follows. Translocates 4-amino-4-deoxy-L-arabinose-phosphoundecaprenol (alpha-L-Ara4N-phosphoundecaprenol) from the cytoplasmic to the periplasmic side of the inner membrane. This Yersinia pestis bv. Antiqua (strain Antiqua) protein is Probable 4-amino-4-deoxy-L-arabinose-phosphoundecaprenol flippase subunit ArnE.